The primary structure comprises 203 residues: NADH-quinone oxidoreductase subunit C (203 aa).

Belongs to the complex I 30 kDa subunit family. As to quaternary structure, NDH-1 is composed of 14 different subunits. Subunits NuoB, C, D, E, F, and G constitute the peripheral sector of the complex.

The protein resides in the cell inner membrane. The catalysed reaction is a quinone + NADH + 5 H(+)(in) = a quinol + NAD(+) + 4 H(+)(out). In terms of biological role, NDH-1 shuttles electrons from NADH, via FMN and iron-sulfur (Fe-S) centers, to quinones in the respiratory chain. The immediate electron acceptor for the enzyme in this species is believed to be ubiquinone. Couples the redox reaction to proton translocation (for every two electrons transferred, four hydrogen ions are translocated across the cytoplasmic membrane), and thus conserves the redox energy in a proton gradient. The sequence is that of NADH-quinone oxidoreductase subunit C from Delftia acidovorans (strain DSM 14801 / SPH-1).